A 248-amino-acid chain; its full sequence is Segregation and condensation protein A (248 aa).

This sequence belongs to the ScpA family. Component of a cohesin-like complex composed of ScpA, ScpB and the Smc homodimer, in which ScpA and ScpB bind to the head domain of Smc. The presence of the three proteins is required for the association of the complex with DNA.

It localises to the cytoplasm. Functionally, participates in chromosomal partition during cell division. May act via the formation of a condensin-like complex containing Smc and ScpB that pull DNA away from mid-cell into both cell halves. The sequence is that of Segregation and condensation protein A from Clostridium perfringens (strain SM101 / Type A).